A 463-amino-acid chain; its full sequence is Formate-nitrite transporter 2 (463 aa).

Over 1 to 100 (MCSIPPLRLL…VKKTQLRIDR (100 aa)) the chain is Cytoplasmic. Residues 101-121 (LLLQAFMAGIFVAMAGHCCTV) form a helical membrane-spanning segment. The Extracellular portion of the chain corresponds to 122–142 (LAGSYPTDPGDPLAVAKPTQK). A helical membrane pass occupies residues 143–163 (FIYGALFPVAFICIILTGAEL). Topologically, residues 164 to 189 (FTGNTMTMLICYFQKRVTMLQLGVNW) are cytoplasmic. The chain crosses the membrane as a helical span at residues 190–210 (LGSLAGNWLGALFGAYFLSYL). Over 211–237 (TGALGDEHVRQFLFRTCVNKISYGWGE) the chain is Extracellular. The chain crosses the membrane as a helical span at residues 238–258 (CFLRGVGCNTFVCLAVWAVIA). Residues 259 to 265 (SENVAGK) are Cytoplasmic-facing. Residues 266–286 (VLVMWFPIVAFCVGGYEHIIA) traverse the membrane as a helical segment. Residues 287–305 (NMYTLQAGLMAGAPVAILD) lie on the Extracellular side of the membrane. The chain crosses the membrane as a helical span at residues 306–326 (VIAFNFLPTLLGNIVGGCLLV). Over 327-463 (GAVYAYNFYP…QTAESVAQQV (137 aa)) the chain is Cytoplasmic. Residues 424-463 (SGNLSTHARLDLPNRPVEPPSDGLEVTPQSQTAESVAQQV) are disordered. Positions 450-463 (TPQSQTAESVAQQV) are enriched in polar residues.

It belongs to the FNT transporter (TC 1.A.16) family. In terms of assembly, homopentamer.

Its subcellular location is the cell membrane. The catalysed reaction is (S)-lactate(in) + H(+)(in) = (S)-lactate(out) + H(+)(out). The enzyme catalyses formate(in) + H(+)(in) = formate(out) + H(+)(out). It catalyses the reaction pyruvate(out) + H(+)(out) = pyruvate(in) + H(+)(in). It carries out the reaction acetate(out) + H(+)(out) = acetate(in) + H(+)(in). Inhibited by p-chloromercuribenzene sulfonate (pCMBS). Methyl methanethiosulfonate (MMTS) inhibits L-lactate but not formate transport. Inhibited by the Malaria Box compound MMV007839. Inhibited by BH-296, BH-317, BH-326 and BH-388 compounds. Functionally, monocarboxylate-proton symporter; active in acidic-to-neutral pH range. Transports L-lactate and formate. The sequence is that of Formate-nitrite transporter 2 from Toxoplasma gondii (strain ATCC 50611 / Me49).